Consider the following 402-residue polypeptide: Uroporphyrinogen decarboxylase 1, chloroplastic (402 aa).

Residues 1–50 (MISATATAAFLAAAPASSSSCTTHRRRSGLPAISASLATASSTEEPLLVR) constitute a chloroplast transit peptide. Substrate contacts are provided by residues 67-71 (RQAGR), Phe-86, Ser-116, Asp-117, Tyr-193, Ser-248, and His-363.

This sequence belongs to the uroporphyrinogen decarboxylase family. In terms of assembly, homodimer.

The protein resides in the plastid. It localises to the chloroplast. The catalysed reaction is uroporphyrinogen III + 4 H(+) = coproporphyrinogen III + 4 CO2. It participates in porphyrin-containing compound metabolism; protoporphyrin-IX biosynthesis; coproporphyrinogen-III from 5-aminolevulinate: step 4/4. Catalyzes the decarboxylation of four acetate groups of uroporphyrinogen-III to yield coproporphyrinogen-III. The protein is Uroporphyrinogen decarboxylase 1, chloroplastic of Oryza sativa subsp. japonica (Rice).